Here is a 148-residue protein sequence, read N- to C-terminus: MSMVKEFKEFALKGNVMDLAVGVIIGGAFSTIVNSIVKDLIMPVVGLATGGLDFSNKFIRLGAIPPSFKGSPESYKDLQTAGVAVFGYGSFITVLINFLILAFIIFLMVKFINNLRKPAEAAPAEPPPTPEDVLLLREIRDSLKNSPR.

2 consecutive transmembrane segments (helical) span residues 16–36 (VMDL…VNSI) and 89–109 (GSFI…FLMV).

Belongs to the MscL family. As to quaternary structure, homopentamer.

The protein localises to the cell inner membrane. Functionally, channel that opens in response to stretch forces in the membrane lipid bilayer. May participate in the regulation of osmotic pressure changes within the cell. This chain is Large-conductance mechanosensitive channel, found in Paraburkholderia xenovorans (strain LB400).